Reading from the N-terminus, the 399-residue chain is Acetate kinase (399 aa).

Position 7 (asparagine 7) interacts with Mg(2+). Lysine 14 serves as a coordination point for ATP. Arginine 91 is a binding site for substrate. Aspartate 148 acts as the Proton donor/acceptor in catalysis. ATP contacts are provided by residues 208 to 212 (HLGNG), 283 to 285 (DFR), and 331 to 335 (GLGEN). Glutamate 384 is a binding site for Mg(2+).

It belongs to the acetokinase family. Homodimer. It depends on Mg(2+) as a cofactor. Requires Mn(2+) as cofactor.

It localises to the cytoplasm. It carries out the reaction acetate + ATP = acetyl phosphate + ADP. It participates in metabolic intermediate biosynthesis; acetyl-CoA biosynthesis; acetyl-CoA from acetate: step 1/2. Catalyzes the formation of acetyl phosphate from acetate and ATP. Can also catalyze the reverse reaction. In Desulfitobacterium hafniense (strain DSM 10664 / DCB-2), this protein is Acetate kinase.